Consider the following 327-residue polypeptide: Tartrate-resistant acid phosphatase type 5 (327 aa).

An N-terminal signal peptide occupies residues 1–22 (MDSWVVLLGLQIIWLPLLTHGT). Residues Asp35, Asp73, Tyr76, and Asn112 each coordinate Fe cation. Residues Asn118 and Asn149 are each glycosylated (N-linked (GlcNAc...) asparagine). The cysteines at positions 163 and 221 are disulfide-linked. Residues His207, His242, and His244 each coordinate Fe cation.

As to quaternary structure, exists either as monomer or, after proteolytic processing, as a dimer of two chains linked by disulfide bond(s). Fe cation is required as a cofactor. As to expression, characteristic constituent of osteoclasts.

It is found in the lysosome. The enzyme catalyses a phosphate monoester + H2O = an alcohol + phosphate. May play a role in the process of bone resorption. The osteoclastic trap acts on nucleotide tri- and diphosphates with higher affinity, compared with other substrates. In Mus musculus (Mouse), this protein is Tartrate-resistant acid phosphatase type 5 (Acp5).